Consider the following 198-residue polypeptide: Elongation factor Ts (198 aa).

The segment at 81–84 is involved in Mg(2+) ion dislocation from EF-Tu; the sequence is TDFV.

It belongs to the EF-Ts family.

It is found in the cytoplasm. Associates with the EF-Tu.GDP complex and induces the exchange of GDP to GTP. It remains bound to the aminoacyl-tRNA.EF-Tu.GTP complex up to the GTP hydrolysis stage on the ribosome. The chain is Elongation factor Ts from Dictyoglomus thermophilum (strain ATCC 35947 / DSM 3960 / H-6-12).